Consider the following 191-residue polypeptide: C-type lectin domain family 2 member D (191 aa).

Residues 1–38 (MHDSNNVEKDITPSELPANPGCLHSKEHSIKATLIWRL) lie on the Cytoplasmic side of the membrane. The chain crosses the membrane as a helical; Signal-anchor for type II membrane protein span at residues 39–59 (FFLIMFLTIIVCGMVAALSAI). The Extracellular segment spans residues 60–191 (RANCHQEPSV…WICSKSDIHV (132 aa)). C75 and C86 form a disulfide bridge. The 104-residue stretch at 82 to 185 (FQRKCFYFSD…HYTERKWICS (104 aa)) folds into the C-type lectin domain. N-linked (GlcNAc...) asparagine glycosylation is found at N95 and N147. A disulfide bridge connects residues C103 and C184.

In terms of assembly, homodimer; disulfide-linked. N-glycosylated. Detected in peripheral blood leukocytes, osteoblasts, lymph node, thymus and spleen. Isoform 1, isoform 2 and isoform 4 are expressed in T- and B-lymphocytes, and at lower levels in NK cells. They are also expressed in B-cell lines and LPS-matured monocyte-derived dendritic cells.

The protein localises to the cell membrane. It localises to the endoplasmic reticulum. Receptor for KLRB1 that protects target cells against natural killer cell-mediated lysis. Inhibits osteoclast formation. Inhibits bone resorption. Modulates the release of interferon-gamma. Binds high molecular weight sulfated glycosaminoglycans. The polypeptide is C-type lectin domain family 2 member D (CLEC2D) (Homo sapiens (Human)).